A 125-amino-acid chain; its full sequence is MARIAGIDLPNNKQLQIALTSIYGIGRSRALEICKKTGILPEKRAKDLDNEEVNKLRKIIESDYVVEGKLRSELAMSIKRLMDIACYRGLRHRKGLPLRGQRTKTNARTRKGKRKTVANKKIAAK.

The tract at residues glutamine 101–lysine 125 is disordered.

This sequence belongs to the universal ribosomal protein uS13 family. Part of the 30S ribosomal subunit. Forms a loose heterodimer with protein S19. Forms two bridges to the 50S subunit in the 70S ribosome.

Functionally, located at the top of the head of the 30S subunit, it contacts several helices of the 16S rRNA. In the 70S ribosome it contacts the 23S rRNA (bridge B1a) and protein L5 of the 50S subunit (bridge B1b), connecting the 2 subunits; these bridges are implicated in subunit movement. Contacts the tRNAs in the A and P-sites. This is Small ribosomal subunit protein uS13 from Borrelia duttonii (strain Ly).